The sequence spans 299 residues: Taste receptor type 2 member 5 (299 aa).

Methionine 1 is a topological domain (extracellular). Residues 2-22 form a helical membrane-spanning segment; that stretch reads LSAGLGLLMLVAVVEFLIGLI. Residues 23–45 are Cytoplasmic-facing; that stretch reads GNGVLVVWSFREWIRKFSWSSYN. A helical transmembrane segment spans residues 46-66; the sequence is LIILGLAGCRFVLQWLIILDL. The Extracellular portion of the chain corresponds to 67–82; sequence SLFPLFQSSRWLRYLS. A helical transmembrane segment spans residues 83 to 103; sequence IFWVLVSQASLWFATFLSVFY. Residues 104–127 lie on the Cytoplasmic side of the membrane; the sequence is CKKITTFDHPAYLWLKQRAYNLSL. The helical transmembrane segment at 128–148 threads the bilayer; the sequence is WCLLGYFIINLLLTVQIGLMF. The Extracellular portion of the chain corresponds to 149–175; it reads YHPPQGNSSIRYPFESWQYLYAFRLNS. A glycan (N-linked (GlcNAc...) asparagine) is linked at asparagine 155. A helical transmembrane segment spans residues 176-196; that stretch reads GSYLPLMVFLVSSGMLIVSLY. Over 197 to 223 the chain is Cytoplasmic; the sequence is THHKKMKVHSAGRRDVRAKAHITALKS. A helical transmembrane segment spans residues 224-244; the sequence is LGCFLLLHLVYIMASPFSIAS. The Extracellular portion of the chain corresponds to 245–253; that stretch reads KTYPPDLTS. A helical transmembrane segment spans residues 254 to 274; sequence VFIWETLMAAYPSLHSLILIM. Topologically, residues 275 to 299 are cytoplasmic; that stretch reads GIPRVKQTCQKILWKTVCARRCWGP.

This sequence belongs to the G-protein coupled receptor T2R family.

Its subcellular location is the membrane. Functionally, receptor that may play a role in the perception of bitterness and is gustducin-linked. May play a role in sensing the chemical composition of the gastrointestinal content. The activity of this receptor may stimulate alpha gustducin, mediate PLC-beta-2 activation and lead to the gating of TRPM5. In Pan paniscus (Pygmy chimpanzee), this protein is Taste receptor type 2 member 5 (TAS2R5).